We begin with the raw amino-acid sequence, 149 residues long: Ribonuclease pancreatic (149 aa).

An N-terminal signal peptide occupies residues 1–25 (MGLENSLILFSLLVLVLGWVQPSLG). Positions 25–62 (GKESSPDKFKRQHMDTEGSSKSSPTYCNQMRSPQEMTK) are disordered. Positions 28–42 (SSPDKFKRQHMDTEG) are enriched in basic and acidic residues. Lys32 and Arg35 together coordinate substrate. The active-site Proton acceptor is His37. Polar residues predominate over residues 43–61 (SSKSSPTYCNQMRSPQEMT). 4 disulfide bridges follow: Cys51/Cys109, Cys65/Cys120, Cys83/Cys135, and Cys90/Cys97. Residues 66–70 (KPVNT) and Lys91 each bind substrate. The active-site Proton donor is the His144.

It belongs to the pancreatic ribonuclease family. Monomer. Interacts with and forms tight 1:1 complexes with RNH1. Dimerization of two such complexes may occur. Interaction with RNH1 inhibits this protein.

The protein resides in the secreted. It carries out the reaction an [RNA] containing cytidine + H2O = an [RNA]-3'-cytidine-3'-phosphate + a 5'-hydroxy-ribonucleotide-3'-[RNA].. It catalyses the reaction an [RNA] containing uridine + H2O = an [RNA]-3'-uridine-3'-phosphate + a 5'-hydroxy-ribonucleotide-3'-[RNA].. Its function is as follows. Endonuclease that catalyzes the cleavage of RNA on the 3' side of pyrimidine nucleotides. Acts on single-stranded and double-stranded RNA. This chain is Ribonuclease pancreatic (RNASE1), found in Sundamys muelleri (Mueller's giant sunda rat).